Here is a 91-residue protein sequence, read N- to C-terminus: Small ribosomal subunit protein uS19 (91 aa).

This sequence belongs to the universal ribosomal protein uS19 family.

Protein S19 forms a complex with S13 that binds strongly to the 16S ribosomal RNA. The protein is Small ribosomal subunit protein uS19 of Prochlorococcus marinus (strain NATL1A).